A 307-amino-acid chain; its full sequence is UDP-N-acetylenolpyruvoylglucosamine reductase (307 aa).

Residues 21–183 enclose the FAD-binding PCMH-type domain; the sequence is RVGGPADLFF…TEVVMEGPPG (163 aa). Arg163 is a catalytic residue. The segment covering 200–209 has biased composition (basic and acidic residues); it reads EATQPTKDRT. The disordered stretch occupies residues 200-227; that stretch reads EATQPTKDRTAGSTFRNPAGFSSTGRAD. The span at 210-224 shows a compositional bias: polar residues; it reads AGSTFRNPAGFSSTG. Ser212 serves as the catalytic Proton donor. Glu294 is a catalytic residue.

It belongs to the MurB family. The cofactor is FAD.

It is found in the cytoplasm. It catalyses the reaction UDP-N-acetyl-alpha-D-muramate + NADP(+) = UDP-N-acetyl-3-O-(1-carboxyvinyl)-alpha-D-glucosamine + NADPH + H(+). It participates in cell wall biogenesis; peptidoglycan biosynthesis. In terms of biological role, cell wall formation. This is UDP-N-acetylenolpyruvoylglucosamine reductase from Dinoroseobacter shibae (strain DSM 16493 / NCIMB 14021 / DFL 12).